The primary structure comprises 301 residues: Probable alpha-L-glutamate ligase (301 aa).

Positions 104–287 (LQLLSRKGVG…IAGMVIDFIE (184 aa)) constitute an ATP-grasp domain. Residues Lys141, 178 to 179 (EY), Asp187, and 211 to 213 (RSN) each bind ATP. Residues Asp248, Glu260, and Asn262 each coordinate Mg(2+). Mn(2+)-binding residues include Asp248, Glu260, and Asn262.

Belongs to the RimK family. Mg(2+) is required as a cofactor. The cofactor is Mn(2+).

The chain is Probable alpha-L-glutamate ligase from Pseudoalteromonas translucida (strain TAC 125).